The following is a 367-amino-acid chain: MKSLFQRRASKVRETEAMNAPVPNNQKAELLQKVVEHVDITSYDARPIIDSMRKMSFSSRDTARAADIFNMALADKGCSTWLILAGSTSAGGCMHVYRDMVKNGMIDAVVATGASIVDMDFFEALGFKHYQAAGPVDDNVLRDNYIDRIYDTYIDEEELQACDHTILEICNKLEPRGYSSREFIWEMGKWLAEGNAKKEGSLIQTAYEEGVPIFCPAFVDSSAGFGLVKHQKEKIAEKKPYLMIDAVADFRELTDVKIAAGTTGLFMVGGGVPKNFAQDTVVCAEILGVEADMHKYAIQITVADVRDGACSSSTLKEAASWGKVSTTYEQMVFAEATTVVPLIASDAYWRKAWEGREKPRWNKLFGK.

A disordered region spans residues 1–23 (MKSLFQRRASKVRETEAMNAPVP).

Belongs to the deoxyhypusine synthase family.

The polypeptide is Deoxyhypusine synthase-like protein (Caulobacter vibrioides (strain ATCC 19089 / CIP 103742 / CB 15) (Caulobacter crescentus)).